The chain runs to 436 residues: GTPase Der (436 aa).

EngA-type G domains lie at 4–167 (PTVA…PVEE) and 175–351 (IRFS…ESQN). Residues 10 to 17 (GRPNVGKS), 57 to 61 (DTGGI), 119 to 122 (NKVD), 181 to 188 (GRPNVGKS), 229 to 233 (DTAGM), and 294 to 297 (NKWD) each bind GTP. Positions 352 to 436 (KRIPSAVLND…PINLIARKRK (85 aa)) constitute a KH-like domain.

Belongs to the TRAFAC class TrmE-Era-EngA-EngB-Septin-like GTPase superfamily. EngA (Der) GTPase family. As to quaternary structure, associates with the 50S ribosomal subunit.

In terms of biological role, GTPase that plays an essential role in the late steps of ribosome biogenesis. This Streptococcus agalactiae serotype Ia (strain ATCC 27591 / A909 / CDC SS700) protein is GTPase Der.